We begin with the raw amino-acid sequence, 184 residues long: Ribosome maturation factor RimM (184 aa).

One can recognise a PRC barrel domain in the interval 101-180; the sequence is DGEFFYCDLV…KITTNNAKTL (80 aa).

It belongs to the RimM family. Binds ribosomal protein uS19.

The protein resides in the cytoplasm. Functionally, an accessory protein needed during the final step in the assembly of 30S ribosomal subunit, possibly for assembly of the head region. Essential for efficient processing of 16S rRNA. May be needed both before and after RbfA during the maturation of 16S rRNA. It has affinity for free ribosomal 30S subunits but not for 70S ribosomes. The protein is Ribosome maturation factor RimM of Helicobacter pylori (strain Shi470).